The chain runs to 95 residues: Neurexophilin-3 (95 aa).

2 N-linked (GlcNAc...) asparagine glycosylation sites follow: asparagine 1 and asparagine 7. Residues 1-21 form an III region; the sequence is NATGQGNISISLVPPSKAVEX. The segment at 22 to 30 is IV (linker domain); it reads HQXQQIFIE. The segment at 31-95 is v (Cys-rich); it reads AKASKIFNCR…YIAFYSTDYR (65 aa).

Belongs to the neurexophilin family.

Its subcellular location is the secreted. In terms of biological role, may be signaling molecules that resemble neuropeptides. Ligand for alpha-neurexins. This Macaca mulatta (Rhesus macaque) protein is Neurexophilin-3 (NXPH3).